Here is a 382-residue protein sequence, read N- to C-terminus: Alkanesulfonate monooxygenase (382 aa).

The protein belongs to the SsuD family. In terms of assembly, homotetramer.

The enzyme catalyses an alkanesulfonate + FMNH2 + O2 = an aldehyde + FMN + sulfite + H2O + 2 H(+). Catalyzes the desulfonation of aliphatic sulfonates. This Yersinia pestis bv. Antiqua (strain Antiqua) protein is Alkanesulfonate monooxygenase.